The primary structure comprises 162 residues: Catabolic 3-dehydroquinase (162 aa).

Residue tyrosine 24 is the Proton acceptor of the active site. Asparagine 88, histidine 94, and aspartate 101 together coordinate substrate. Histidine 114 (proton donor) is an active-site residue. Substrate-binding positions include 115–116 (VS) and arginine 125.

The protein belongs to the type-II 3-dehydroquinase family. Homododecamer. Adopts a ring-like structure, composed of an arrangement of two hexameric rings stacked on top of one another.

The catalysed reaction is 3-dehydroquinate = 3-dehydroshikimate + H2O. It functions in the pathway aromatic compound metabolism; 3,4-dihydroxybenzoate biosynthesis; 3,4-dihydroxybenzoate from 3-dehydroquinate: step 1/2. In terms of biological role, is involved in the catabolism of quinate. Allows the utilization of quinate as carbon source via the beta-ketoadipate pathway. The chain is Catabolic 3-dehydroquinase from Podospora anserina (strain S / ATCC MYA-4624 / DSM 980 / FGSC 10383) (Pleurage anserina).